Consider the following 435-residue polypeptide: Methanethiol oxidase (435 aa).

A signal peptide spans 1-24 (MKKHLLAGACALAMGFAVIPGTFA).

Belongs to the selenium-binding protein family. In terms of assembly, homotetramer. Cu cation is required as a cofactor.

It localises to the periplasm. It carries out the reaction methanethiol + O2 + H2O = hydrogen sulfide + formaldehyde + H2O2 + H(+). It functions in the pathway organosulfur degradation. Its activity is regulated as follows. Inhibited by EDTA but not by EGTA. Catalyzes the oxidation of methanethiol. Can also degrade ethanethiol, but not methanol, methylamine or dimethylsulfide. The chain is Methanethiol oxidase from Hyphomicrobium sp.